The following is an 895-amino-acid chain: uncharacterized protein (895 aa).

Residue 2 to 19 (NISVIGTGYVGLIQAVGL) coordinates NAD(+). Residue Cys-261 is part of the active site. The DOD-type homing endonuclease domain occupies 468–614 (LIGYYLSEGW…LLILLQLLGI (147 aa)).

The protein belongs to the UDP-glucose/GDP-mannose dehydrogenase family. In terms of processing, this protein undergoes a protein self splicing that involves a post-translational excision of the intervening region (intein) followed by peptide ligation.

This is an uncharacterized protein from Methanocaldococcus jannaschii (strain ATCC 43067 / DSM 2661 / JAL-1 / JCM 10045 / NBRC 100440) (Methanococcus jannaschii).